The following is a 387-amino-acid chain: Testis-expressed protein 9 (387 aa).

Disordered regions lie at residues 1–25 and 58–133; these read MAGRSVRVPRRGSAGTQSRGQLAAG and REQQ…LKYP. 2 stretches are compositionally biased toward polar residues: residues 70–91 and 103–115; these read ALTTSCKEEGGSSSRDLLSSEG and KNTGPVNKIQNRL. A coiled-coil region spans residues 184–347; sequence IGTEAQIRFL…ERQKGELMIG (164 aa).

As to expression, testis-specific.

Its subcellular location is the cytoplasm. The protein resides in the cytoskeleton. It localises to the microtubule organizing center. The protein localises to the centrosome. It is found in the centriolar satellite. The chain is Testis-expressed protein 9 (Tex9) from Mus musculus (Mouse).